Consider the following 483-residue polypeptide: Betaine aldehyde dehydrogenase (483 aa).

The K(+) site is built by Ile27 and Asp93. 149–151 (GAW) provides a ligand contact to NAD(+). Lys161 (charge relay system) is an active-site residue. An NAD(+)-binding site is contributed by 175-178 (KPSE). A K(+)-binding site is contributed by Val179. 228–231 (SVPT) is an NAD(+) binding site. Val243 provides a ligand contact to K(+). Glu249 functions as the Proton acceptor in the catalytic mechanism. NAD(+) is bound by residues Gly251, Cys283, and Glu380. Catalysis depends on Cys283, which acts as the Nucleophile. At Cys283 the chain carries Cysteine sulfenic acid (-SOH). Lys450 and Gly453 together coordinate K(+). Glu457 serves as the catalytic Charge relay system.

The protein belongs to the aldehyde dehydrogenase family. As to quaternary structure, dimer of dimers. K(+) is required as a cofactor.

The enzyme catalyses betaine aldehyde + NAD(+) + H2O = glycine betaine + NADH + 2 H(+). It participates in amine and polyamine biosynthesis; betaine biosynthesis via choline pathway; betaine from betaine aldehyde: step 1/1. Involved in the biosynthesis of the osmoprotectant glycine betaine. Catalyzes the irreversible oxidation of betaine aldehyde to the corresponding acid. The protein is Betaine aldehyde dehydrogenase of Cereibacter sphaeroides (strain KD131 / KCTC 12085) (Rhodobacter sphaeroides).